The chain runs to 62 residues: UPF0434 protein Rleg2_3773 (62 aa).

Belongs to the UPF0434 family.

This chain is UPF0434 protein Rleg2_3773, found in Rhizobium leguminosarum bv. trifolii (strain WSM2304).